We begin with the raw amino-acid sequence, 222 residues long: 2-C-methyl-D-erythritol 4-phosphate cytidylyltransferase (222 aa).

Belongs to the IspD/TarI cytidylyltransferase family. IspD subfamily.

The catalysed reaction is 2-C-methyl-D-erythritol 4-phosphate + CTP + H(+) = 4-CDP-2-C-methyl-D-erythritol + diphosphate. It functions in the pathway isoprenoid biosynthesis; isopentenyl diphosphate biosynthesis via DXP pathway; isopentenyl diphosphate from 1-deoxy-D-xylulose 5-phosphate: step 2/6. In terms of biological role, catalyzes the formation of 4-diphosphocytidyl-2-C-methyl-D-erythritol from CTP and 2-C-methyl-D-erythritol 4-phosphate (MEP). This is 2-C-methyl-D-erythritol 4-phosphate cytidylyltransferase from Porphyromonas gingivalis (strain ATCC 33277 / DSM 20709 / CIP 103683 / JCM 12257 / NCTC 11834 / 2561).